The following is a 929-amino-acid chain: Protein translocase subunit SecA (929 aa).

ATP-binding positions include Gln-83, Gly-101–Thr-105, and Asp-491.

It belongs to the SecA family. In terms of assembly, monomer and homodimer. Part of the essential Sec protein translocation apparatus which comprises SecA, SecYEG and auxiliary proteins SecDF. Other proteins may also be involved.

The protein localises to the cell inner membrane. It localises to the cellular thylakoid membrane. Its subcellular location is the cytoplasm. It carries out the reaction ATP + H2O + cellular proteinSide 1 = ADP + phosphate + cellular proteinSide 2.. Its function is as follows. Part of the Sec protein translocase complex. Interacts with the SecYEG preprotein conducting channel. Has a central role in coupling the hydrolysis of ATP to the transfer of proteins into and across the cell membrane, serving as an ATP-driven molecular motor driving the stepwise translocation of polypeptide chains across the membrane. Probably participates in protein translocation into and across both the cytoplasmic and thylakoid membranes in cyanobacterial cells. The protein is Protein translocase subunit SecA of Thermosynechococcus vestitus (strain NIES-2133 / IAM M-273 / BP-1).